A 425-amino-acid polypeptide reads, in one-letter code: MSVLGKTLQEKVNLLAQYPQTGLSLKQLVYFGKNPTPGTLFRAGLFLRDELPIRLARRIQDLQNLSPMLRSMKRISSVKAAYGRSMEEIIELKGVELPKCLPKHARYHNAPKWRSSLMDSEILHNPSLANTHLDSSKGRYFETDFSDQDNGVDCNWPESLLKFNSNFAYLLNTIRTRHDNVAVEIALDIQEYRRKTNQIDNSIQIFLDRFYMSRIGIRMLLGQYIALVSEPPRENYVGVISTRANIYQIIEGAAENAKYICRLAYGLFEAPEIQIICDPSLEMMYVESHLNHAVFEILKNSLRATVEFHGVDSDFFPPIKVIVAKGQEDITIKISDEGGGISRRNIPLVWSYMFTTASPTLTDDPHDIVSANSTTPMAGFGFGLPLARLYTRYFGGDLELISMEGYGTDVYIHLNRLCESAEPLQ.

A Phosphohistidine; by autocatalysis modification is found at H178. The region spanning 180–418 (NVAVEIALDI…DVYIHLNRLC (239 aa)) is the Histidine kinase domain. ATP-binding positions include 296 to 303 (EILKNSLR), D336, 355 to 356 (TT), and 379 to 384 (GFGFGL).

Belongs to the PDK/BCKDK protein kinase family.

Its subcellular location is the mitochondrion matrix. The enzyme catalyses L-seryl-[pyruvate dehydrogenase E1 alpha subunit] + ATP = O-phospho-L-seryl-[pyruvate dehydrogenase E1 alpha subunit] + ADP + H(+). Functionally, inhibits the mitochondrial pyruvate dehydrogenase complex by phosphorylation of the E1 alpha subunit, thus contributing to the regulation of glucose metabolism. In Schizosaccharomyces pombe (strain 972 / ATCC 24843) (Fission yeast), this protein is [Pyruvate dehydrogenase (acetyl-transferring)] kinase, mitochondrial (pkp1).